Reading from the N-terminus, the 154-residue chain is Ribonuclease 1 (154 aa).

Belongs to the BetVI family.

It is found in the cytoplasm. Functionally, catalyzes the two-stage endonucleolytic cleavage to 3'-phosphomononucleotides and 3'-phosphooligonucleotides with 2',3'-cyclic phosphate intermediates. The chain is Ribonuclease 1 from Panax ginseng (Korean ginseng).